Consider the following 313-residue polypeptide: Dehydrogenase/reductase SDR family member 1 (313 aa).

Position 2 is an N-acetylalanine (A2). An NAD(+)-binding site is contributed by I19. Omega-N-methylarginine is present on R21. D64 provides a ligand contact to NAD(+). S151 lines the substrate pocket. Residues Y163, K167, and T198 each contribute to the NAD(+) site. Y163 acts as the Proton acceptor in catalysis. Positions 235–313 (CVVALATDPN…WIIALYTSKF (79 aa)) are required for ER localization.

The protein belongs to the short-chain dehydrogenases/reductases (SDR) family. In terms of tissue distribution, detected in heart, liver, adrenal glands, and at low levels in skeletal muscle, kidney, pancreas and brain.

It localises to the endoplasmic reticulum. The catalysed reaction is 17alpha-estradiol + NADP(+) = estrone + NADPH + H(+). It catalyses the reaction testosterone + NADP(+) = androst-4-ene-3,17-dione + NADPH + H(+). It carries out the reaction prostaglandin E1 + NADPH + H(+) = prostaglandin F1 + NADP(+). The enzyme catalyses isatin + NADPH + H(+) = 3-hydroxyindolin-2-one + NADP(+). NADPH-dependent oxidoreductase which catalyzes the reduction of steroids (estrone, androstene-3,17-dione and cortisone) as well as prostaglandin E1, isatin and xenobiotics in vitro. May have a role in steroid and/or xenobiotic metabolism. This is Dehydrogenase/reductase SDR family member 1 from Homo sapiens (Human).